Here is a 509-residue protein sequence, read N- to C-terminus: Coiled-coil domain-containing protein 181 (509 aa).

The segment covering 58–82 has biased composition (basic and acidic residues); the sequence is VIEHTKQHSDPDKSLQDEVSPRKND. Disordered stretches follow at residues 58-120, 241-332, and 345-367; these read VIEH…EEED, PINN…VTST, and QLEQ…EEKE. 2 stretches are compositionally biased toward polar residues: residues 243 to 266 and 300 to 332; these read NNAN…SVSG and TCPS…VTST. A coiled-coil region spans residues 335-375; that stretch reads LSPRQKELQKQLEQKREKLKREEERRKIEEEKEKKRENDIV.

This sequence belongs to the CCDC181 family. In terms of assembly, homodimer. Interacts with HOOK1. Interacts with HOOK2. Interacts with HOOK3.

Its subcellular location is the cytoplasm. The protein localises to the cytoskeleton. The protein resides in the cell projection. It is found in the cilium. It localises to the flagellum. Its function is as follows. Microtubule-binding protein that localizes to the microtubular manchette of elongating spermatids. The polypeptide is Coiled-coil domain-containing protein 181 (Pongo abelii (Sumatran orangutan)).